The chain runs to 216 residues: Adenylate kinase (216 aa).

ATP is bound at residue 10–15 (GAGKGT). Positions 30-59 (STGDIFRANIKEKTPLGIEAKRYIDNGQLV) are NMP. AMP-binding positions include threonine 31, arginine 36, 57 to 59 (QLV), 85 to 88 (GFPR), and glutamine 92. The tract at residues 126 to 163 (GRRVCTSCGASYHIRFNPPKIEGKCDICDNELIQRKDD) is LID. Arginine 127 provides a ligand contact to ATP. The Zn(2+) site is built by cysteine 130 and cysteine 133. ATP is bound at residue 136 to 137 (SY). The Zn(2+) site is built by cysteine 150 and cysteine 153. AMP is bound by residues arginine 160 and arginine 171. Glutamate 199 serves as a coordination point for ATP.

The protein belongs to the adenylate kinase family. In terms of assembly, monomer.

Its subcellular location is the cytoplasm. It catalyses the reaction AMP + ATP = 2 ADP. Its pathway is purine metabolism; AMP biosynthesis via salvage pathway; AMP from ADP: step 1/1. In terms of biological role, catalyzes the reversible transfer of the terminal phosphate group between ATP and AMP. Plays an important role in cellular energy homeostasis and in adenine nucleotide metabolism. The protein is Adenylate kinase of Clostridium botulinum (strain ATCC 19397 / Type A).